A 363-amino-acid polypeptide reads, in one-letter code: 3-isopropylmalate dehydrogenase (363 aa).

79 to 92 serves as a coordination point for NAD(+); that stretch reads GPKWEHLPPNEQPE. Arg100, Arg110, Arg139, and Asp228 together coordinate substrate. Asp228, Asp252, and Asp256 together coordinate Mg(2+). 286 to 298 contributes to the NAD(+) binding site; that stretch reads GSAPDIAGKNIAN.

The protein belongs to the isocitrate and isopropylmalate dehydrogenases family. LeuB type 1 subfamily. Homodimer. It depends on Mg(2+) as a cofactor. Requires Mn(2+) as cofactor.

Its subcellular location is the cytoplasm. It catalyses the reaction (2R,3S)-3-isopropylmalate + NAD(+) = 4-methyl-2-oxopentanoate + CO2 + NADH. It participates in amino-acid biosynthesis; L-leucine biosynthesis; L-leucine from 3-methyl-2-oxobutanoate: step 3/4. Functionally, catalyzes the oxidation of 3-carboxy-2-hydroxy-4-methylpentanoate (3-isopropylmalate) to 3-carboxy-4-methyl-2-oxopentanoate. The product decarboxylates to 4-methyl-2 oxopentanoate. The sequence is that of 3-isopropylmalate dehydrogenase from Vibrio cholerae serotype O1 (strain ATCC 39315 / El Tor Inaba N16961).